The sequence spans 297 residues: Ribosomal RNA small subunit methyltransferase H (297 aa).

S-adenosyl-L-methionine is bound by residues 37-39 (GGH), glutamate 56, phenylalanine 87, aspartate 102, and histidine 109.

This sequence belongs to the methyltransferase superfamily. RsmH family.

It is found in the cytoplasm. It catalyses the reaction cytidine(1402) in 16S rRNA + S-adenosyl-L-methionine = N(4)-methylcytidine(1402) in 16S rRNA + S-adenosyl-L-homocysteine + H(+). Its function is as follows. Specifically methylates the N4 position of cytidine in position 1402 (C1402) of 16S rRNA. In Borrelia recurrentis (strain A1), this protein is Ribosomal RNA small subunit methyltransferase H.